A 283-amino-acid chain; its full sequence is 2-dehydro-3-deoxyphosphooctonate aldolase (283 aa).

This sequence belongs to the KdsA family.

The protein resides in the cytoplasm. It catalyses the reaction D-arabinose 5-phosphate + phosphoenolpyruvate + H2O = 3-deoxy-alpha-D-manno-2-octulosonate-8-phosphate + phosphate. The protein operates within carbohydrate biosynthesis; 3-deoxy-D-manno-octulosonate biosynthesis; 3-deoxy-D-manno-octulosonate from D-ribulose 5-phosphate: step 2/3. It functions in the pathway bacterial outer membrane biogenesis; lipopolysaccharide biosynthesis. This chain is 2-dehydro-3-deoxyphosphooctonate aldolase, found in Vibrio parahaemolyticus serotype O3:K6 (strain RIMD 2210633).